Reading from the N-terminus, the 225-residue chain is UPF0758 protein MADE_1000235 (225 aa).

The MPN domain maps to 102 to 224; it reads VFNNVDDTKR…TISFAQRGLL (123 aa). Zn(2+) contacts are provided by His-173, His-175, and Asp-186. Positions 173 to 186 match the JAMM motif motif; it reads HNHPSGVAEPSHAD.

The protein belongs to the UPF0758 family.

The protein is UPF0758 protein MADE_1000235 of Alteromonas mediterranea (strain DSM 17117 / CIP 110805 / LMG 28347 / Deep ecotype).